Reading from the N-terminus, the 300-residue chain is MTDTPDPAAVLSPAVKAAILSEALPYIRRFHGKTIVVKYGGNAMTEERLQRSFAHDVVLLKLVGLNPVVVHGGGPQIDDALRRLGKQGTFVQGMRVTDAETMEVVEWVLGGQVQQDIVMMINEAGGKAVGLTGKDGMLLQARKKLMADKEKPGELLDIGLVGDVTRVEPAVVKALQDDQFIPVISPIGYGEDGTAYNINADVVAGKIAEVLGAEKLLMMTNTPGVLDKSGKLLRSLSAQTIDELFADGTISGGMLPKISSALDAAKNGVPSVHVVDGRVPHCLLLELLTDQGVGTMISAH.

Substrate-binding positions include 73–74, Arg95, and Asn197; that span reads GG.

It belongs to the acetylglutamate kinase family. ArgB subfamily.

It is found in the cytoplasm. The enzyme catalyses N-acetyl-L-glutamate + ATP = N-acetyl-L-glutamyl 5-phosphate + ADP. The protein operates within amino-acid biosynthesis; L-arginine biosynthesis; N(2)-acetyl-L-ornithine from L-glutamate: step 2/4. Functionally, catalyzes the ATP-dependent phosphorylation of N-acetyl-L-glutamate. The chain is Acetylglutamate kinase from Bordetella avium (strain 197N).